The following is a 738-amino-acid chain: MPLSRSLSVSSLPGLEDWEDEFDPENAVLFEVAWEVANKVGGIYTVLQTKAKVTGDEWGDNYYLVGPYTEQGVRTQVELLEPPTPELKRTLDSMNSKGCKVYFGRWLIEGGPLVVLLDVGASAWALERWKGELWDTCNIGVPWYDREANDAVLFGFLTTWFLGEFLAQNEEKPYVVAHFHEWLAGVGLCLCRARRLPVATIFTTHATLLGRYLCAGAVDFYNNLENFNVDKEAGERQIYHRYCMERAAAHCAHVFTTVSQITAIEAQHLLKRKPDIVTPNGLNVKKFSAMHEFQNLHAQSKARIQEFVRGHFYGHLDFNLDKTLYFFIAGRYEFSNKGADVFLEALARLNYLLRVNGSEQTVVAFFIMPARTNNFNVETLKGQAVRKQLWDTANTVKEKFGRKLYESLLVGSLPDMNKMLDKEDFTMMKRAIFATQRQSFPPVCTHNMLDDSSDPILTTIRRIGLFNSSADRVKVIFHPEFLSSTSPLLPVDYEEFVRGCHLGVFPSYYEPWGYTPAECTVMGIPSISTNLSGFGCFMEEHIADPSAYGIYILDRRFRSLDDSCSQLTSFLYSFCQQSRRQRIIQRNRTERLSDLLDWKYLGRYYMSARHMALAKAFPDHFTYEPHEVDATQGYRYPRPASVPPSPSLSRHSSPHQSEDEEEPRDGPLGEDSERYDEEEEAAKDRRNIRAPEWPRRASCSSSTGGSKRSNSVDTGPSSSLSTPTEPLSPTSSLGEERN.

Ser-8 carries the phosphoserine; by AMPK and PKA modification. Ser-11 carries the phosphoserine modification. A UDP-binding site is contributed by Lys-39. His-205 and Arg-211 together coordinate UDP-alpha-D-glucose. Residues His-291, Glu-292, Gln-294, His-297, and Lys-301 each contribute to the alpha-D-glucose 6-phosphate site. A UDP-binding site is contributed by Arg-331. Arg-331 is a binding site for UDP-alpha-D-glucose. Position 412 is a phosphoserine (Ser-412). His-501 is a binding site for alpha-D-glucose 6-phosphate. UDP-alpha-D-glucose-binding residues include Glu-510, Trp-512, and Gly-513. Thr-515 serves as a coordination point for UDP. Residues Arg-582 and Arg-586 each contribute to the alpha-D-glucose 6-phosphate site. The disordered stretch occupies residues 632 to 738 (QGYRYPRPAS…PTSSLGEERN (107 aa)). A Phosphoserine; by DYRK2, GSK3-alpha, GSK3-beta and PASK modification is found at Ser-641. Residues Ser-645, Ser-649, Ser-652, Ser-653, Ser-657, and Ser-672 each carry the phosphoserine modification. The span at 658 to 681 (EDEEEPRDGPLGEDSERYDEEEEA) shows a compositional bias: acidic residues. Basic and acidic residues predominate over residues 682–695 (AKDRRNIRAPEWPR). Residues Ser-698, Ser-709, and Ser-711 each carry the phosphoserine modification. Positions 698–738 (SCSSSTGGSKRSNSVDTGPSSSLSTPTEPLSPTSSLGEERN) are enriched in low complexity. A phosphothreonine mark is found at Thr-722 and Thr-724. Ser-728 and Ser-732 each carry phosphoserine.

Belongs to the glycosyltransferase 3 family. As to quaternary structure, part of the GYS1-GYG1 complex, a heterooctamer composed of a tetramer of GYS1 and 2 dimers of GYG1, where each GYS1 protomer binds to one GYG1 subunit (via GYG1 C-terminus); the GYS1 tetramer may dissociate from GYG1 dimers to continue glycogen polymerization on its own. In terms of processing, primed phosphorylation at Ser-657 (site 5) by CSNK2A1 and CSNK2A2 is required for inhibitory phosphorylation at Ser-641 (site 3a), Ser-645 (site 3b), Ser-649 (site 3c) and Ser-653 (site 4) by GSK3A an GSK3B. Phosphorylated at Ser-641 by PASK, leading to inactivation; phosphorylation by PASK is inhibited by glycogen. Phosphorylated at Ser-641 by DYRK2, leading to inactivation. Dephosphorylation at Ser-641 and Ser-645 by PP1 activates the enzyme. Phosphorylation at Ser-8 by AMPK inactivates the enzyme activity.

The catalysed reaction is [(1-&gt;4)-alpha-D-glucosyl](n) + UDP-alpha-D-glucose = [(1-&gt;4)-alpha-D-glucosyl](n+1) + UDP + H(+). It participates in glycan biosynthesis; glycogen biosynthesis. With respect to regulation, allosteric activation by glucose-6-phosphate. Phosphorylation reduces the activity towards UDP-glucose. When in the non-phosphorylated state, glycogen synthase does not require glucose-6-phosphate as an allosteric activator; when phosphorylated it does. In terms of biological role, glycogen synthase participates in the glycogen biosynthetic process along with glycogenin and glycogen branching enzyme. Extends the primer composed of a few glucose units formed by glycogenin by adding new glucose units to it. In this context, glycogen synthase transfers the glycosyl residue from UDP-Glc to the non-reducing end of alpha-1,4-glucan. This chain is Glycogen [starch] synthase, muscle (Gys1), found in Mus musculus (Mouse).